A 511-amino-acid chain; its full sequence is U3 snoRNP-associated protein-like YAOH (511 aa).

The span at 1–18 (MAPRPRKRVSRPKPRATS) shows a compositional bias: basic residues. The segment at 1 to 117 (MAPRPRKRVS…EDEDEGEEAG (117 aa)) is disordered. Acidic residues-rich tracts occupy residues 44–53 (EDIESEDSDL) and 66–80 (DDGE…EQET). The span at 81-105 (AGEKKMRIAKELLKKVTDAARRRRE) shows a compositional bias: basic and acidic residues. WD repeat units lie at residues 158 to 197 (KHRQ…SEKY), 217 to 256 (KRSK…HIQA), 259 to 298 (GHRG…YMNC), 301 to 339 (GHQN…QLLF), 342 to 380 (PATA…PTHI), 412 to 451 (SAQS…KGIR), and 457 to 497 (RLDG…QNGV).

This sequence belongs to the WD repeat RRP9 family.

The protein resides in the nucleus. The protein localises to the nucleolus. In terms of biological role, component of a nucleolar small nuclear ribonucleoprotein particle (snoRNP) thought to participate in the processing and modification of pre-ribosomal RNA. Essential for embryogenesis. In Oryza sativa subsp. japonica (Rice), this protein is U3 snoRNP-associated protein-like YAOH.